Reading from the N-terminus, the 155-residue chain is Nascent polypeptide-associated complex subunit beta (155 aa).

Disordered stretches follow at residues 1 to 39 (MDQAKLARLQQSVRIGTGKGTPRRKTKKVHKSSGTDDKK) and 122 to 155 (QNMQKKEGEAKKEGEEDDEDIPDLVGETFESKVE). Residues 21–31 (TPRRKTKKVHK) show a composition bias toward basic residues. An NAC-A/B domain is found at 34 to 99 (GTDDKKLQTS…GEEKELTELV (66 aa)). The segment covering 125 to 135 (QKKEGEAKKEG) has biased composition (basic and acidic residues).

This sequence belongs to the NAC-beta family. As to quaternary structure, part of the nascent polypeptide-associated complex (NAC), consisting of EGD2 and EGD1. NAC associates with ribosomes via EGD1.

It is found in the cytoplasm. Its subcellular location is the nucleus. Component of the nascent polypeptide-associated complex (NAC), a dynamic component of the ribosomal exit tunnel, protecting the emerging polypeptides from interaction with other cytoplasmic proteins to ensure appropriate nascent protein targeting. The NAC complex also promotes mitochondrial protein import by enhancing productive ribosome interactions with the outer mitochondrial membrane and blocks the inappropriate interaction of ribosomes translating non-secretory nascent polypeptides with translocation sites in the membrane of the endoplasmic reticulum. EGD1 may act as a transcription factor that exert a negative effect on the expression of several genes that are transcribed by RNA polymerase II. The protein is Nascent polypeptide-associated complex subunit beta (EGD1) of Coccidioides immitis (strain RS) (Valley fever fungus).